Reading from the N-terminus, the 301-residue chain is Protoheme IX farnesyltransferase 1 (301 aa).

Helical transmembrane passes span 29–49, 51–71, 101–121, 123–143, 150–170, 177–197, 223–243, 244–264, and 274–294; these read VVALMLLTVLVGMCLAVPHAV, VQPLLAGMLGIAMMAGSAAAL, ALIFAASLGSLGFIVLYSLVN, LTAWLTFASLIGYALVYTAYL, NIVIGGLAGAMPPLLGWTAVT, ALLLVIIIFTWTPPHFWALAI, CILLYTVLLAIACLLPVLVGM, CGPVYFVCSSLLSTGFIYKAW, and LAMQVFRFSIYHLMLLFMALL.

It belongs to the UbiA prenyltransferase family. Protoheme IX farnesyltransferase subfamily.

Its subcellular location is the cell inner membrane. The catalysed reaction is heme b + (2E,6E)-farnesyl diphosphate + H2O = Fe(II)-heme o + diphosphate. It functions in the pathway porphyrin-containing compound metabolism; heme O biosynthesis; heme O from protoheme: step 1/1. Converts heme B (protoheme IX) to heme O by substitution of the vinyl group on carbon 2 of heme B porphyrin ring with a hydroxyethyl farnesyl side group. In Shewanella baltica (strain OS195), this protein is Protoheme IX farnesyltransferase 1.